Reading from the N-terminus, the 155-residue chain is Protein-export protein SecB (155 aa).

Belongs to the SecB family. Homotetramer, a dimer of dimers. One homotetramer interacts with 1 SecA dimer.

Its subcellular location is the cytoplasm. In terms of biological role, one of the proteins required for the normal export of preproteins out of the cell cytoplasm. It is a molecular chaperone that binds to a subset of precursor proteins, maintaining them in a translocation-competent state. It also specifically binds to its receptor SecA. The sequence is that of Protein-export protein SecB from Escherichia fergusonii (strain ATCC 35469 / DSM 13698 / CCUG 18766 / IAM 14443 / JCM 21226 / LMG 7866 / NBRC 102419 / NCTC 12128 / CDC 0568-73).